The primary structure comprises 355 residues: S-methyl-5'-thioadenosine phosphorylase (355 aa).

Phosphate contacts are provided by residues T45, 91–92, and 124–125; these read RH and SA. M226 is a substrate binding site. Position 227 (S227) interacts with phosphate. 250–252 provides a ligand contact to substrate; it reads DYD.

It belongs to the PNP/MTAP phosphorylase family. MTAP subfamily. In terms of assembly, homotrimer.

It localises to the cytoplasm. The protein localises to the nucleus. The enzyme catalyses S-methyl-5'-thioadenosine + phosphate = 5-(methylsulfanyl)-alpha-D-ribose 1-phosphate + adenine. The protein operates within amino-acid biosynthesis; L-methionine biosynthesis via salvage pathway; S-methyl-5-thio-alpha-D-ribose 1-phosphate from S-methyl-5'-thioadenosine (phosphorylase route): step 1/1. In terms of biological role, catalyzes the reversible phosphorylation of S-methyl-5'-thioadenosine (MTA) to adenine and 5-methylthioribose-1-phosphate. Involved in the breakdown of MTA, a major by-product of polyamine biosynthesis. Responsible for the first step in the methionine salvage pathway after MTA has been generated from S-adenosylmethionine. Has broad substrate specificity with 6-aminopurine nucleosides as preferred substrates. This is S-methyl-5'-thioadenosine phosphorylase from Emericella nidulans (strain FGSC A4 / ATCC 38163 / CBS 112.46 / NRRL 194 / M139) (Aspergillus nidulans).